A 548-amino-acid polypeptide reads, in one-letter code: Pentatricopeptide repeat-containing protein At5g15300 (548 aa).

11 PPR repeats span residues 76–110, 111–145, 146–176, 177–211, 212–238, 239–273, 274–308, 314–348, 349–378, 379–409, and 415–445; these read DVSI…GVSP, DRYT…GFVL, NEYV…SAKA, HKVA…DQVA, WNVM…FTEK, DVVT…GEHP, DVVT…ASVS, GTPI…DLST, WNTL…KVWP, NEVT…MRDM, and NIKH…MKIE. Positions 450–525 are type E motif; that stretch reads VWRTLLGACK…PTGVSLIEED (76 aa).

It belongs to the PPR family. PCMP-E subfamily.

In Arabidopsis thaliana (Mouse-ear cress), this protein is Pentatricopeptide repeat-containing protein At5g15300 (PCMP-E40).